The chain runs to 618 residues: UvrABC system protein C (618 aa).

Residues 13–92 (DKPGVYLMKN…IKKYRPKYNI (80 aa)) enclose the GIY-YIG domain. The UVR domain maps to 204 to 239 (LDIVENFKLNMEKAAENLEFEKAAMLRDKINIIEKI).

It belongs to the UvrC family. Interacts with UvrB in an incision complex.

The protein resides in the cytoplasm. In terms of biological role, the UvrABC repair system catalyzes the recognition and processing of DNA lesions. UvrC both incises the 5' and 3' sides of the lesion. The N-terminal half is responsible for the 3' incision and the C-terminal half is responsible for the 5' incision. This Clostridium botulinum (strain Okra / Type B1) protein is UvrABC system protein C.